A 271-amino-acid chain; its full sequence is Formamidopyrimidine-DNA glycosylase (271 aa).

The active-site Schiff-base intermediate with DNA is the Pro-2. The Proton donor role is filled by Glu-3. Lys-58 serves as the catalytic Proton donor; for beta-elimination activity. DNA-binding residues include His-91, Arg-110, and Arg-152. Residues 237-271 form an FPG-type zinc finger; it reads RVYDRAGQPCRVCGEPIRCVRLGQRATYYCPRCQR. The Proton donor; for delta-elimination activity role is filled by Arg-261.

The protein belongs to the FPG family. As to quaternary structure, monomer. Zn(2+) serves as cofactor.

The catalysed reaction is Hydrolysis of DNA containing ring-opened 7-methylguanine residues, releasing 2,6-diamino-4-hydroxy-5-(N-methyl)formamidopyrimidine.. It carries out the reaction 2'-deoxyribonucleotide-(2'-deoxyribose 5'-phosphate)-2'-deoxyribonucleotide-DNA = a 3'-end 2'-deoxyribonucleotide-(2,3-dehydro-2,3-deoxyribose 5'-phosphate)-DNA + a 5'-end 5'-phospho-2'-deoxyribonucleoside-DNA + H(+). Involved in base excision repair of DNA damaged by oxidation or by mutagenic agents. Acts as a DNA glycosylase that recognizes and removes damaged bases. Has a preference for oxidized purines, such as 7,8-dihydro-8-oxoguanine (8-oxoG). Has AP (apurinic/apyrimidinic) lyase activity and introduces nicks in the DNA strand. Cleaves the DNA backbone by beta-delta elimination to generate a single-strand break at the site of the removed base with both 3'- and 5'-phosphates. This is Formamidopyrimidine-DNA glycosylase from Methylococcus capsulatus (strain ATCC 33009 / NCIMB 11132 / Bath).